Reading from the N-terminus, the 441-residue chain is Protein eva-1 homolog C (441 aa).

Residues 1 to 23 are disordered; the sequence is MLLPGPARQPPTPQPVQHPGLRR. The signal sequence occupies residues 1-48; that stretch reads MLLPGPARQPPTPQPVQHPGLRRQVEPPGQLLRLFYCTVLVCSKEISA. Pro residues predominate over residues 7–16; sequence ARQPPTPQPV. Topologically, residues 49 to 322 are extracellular; that stretch reads LTDFSGYLTK…AYIRAHPERA (274 aa). Asn-62 carries N-linked (GlcNAc...) asparagine glycosylation. Residues 67–159 enclose the SUEL-type lectin 1 domain; sequence ACDGDYLNLQ…KYLLVSFKCQ (93 aa). Residue Asn-165 is glycosylated (N-linked (GlcNAc...) asparagine). The 93-residue stretch at 168-260 folds into the SUEL-type lectin 2 domain; the sequence is VCEDQELKLH…KYLTVTYACV (93 aa). A helical membrane pass occupies residues 323–343; it reads ALLFVSSVCIGLALTLCALVI. At 344-441 the chain is on the cytoplasmic side; the sequence is RESCAKDFRD…SLPRNMGQFY (98 aa). The tract at residues 362-391 is disordered; sequence VPGSDKVEEDSEDEEEEEDSSESDFPGELS. Residues 368–383 show a composition bias toward acidic residues; the sequence is VEEDSEDEEEEEDSSE.

Belongs to the EVA1 family.

Its subcellular location is the cell membrane. Functionally, binds heparin. This chain is Protein eva-1 homolog C (EVA1C), found in Pan troglodytes (Chimpanzee).